The primary structure comprises 904 residues: E3 SUMO-protein ligase SIZ1 (904 aa).

Residues 1–13 (MINLEDYWEDETP) are compositionally biased toward acidic residues. A disordered region spans residues 1 to 21 (MINLEDYWEDETPGPDREPTN). The region spanning 34 to 68 (MELLKVSELKDICRSVSFPVSGRKAVLQDLIRNFL) is the SAP domain. The disordered stretch occupies residues 122–170 (MEGPPTVQQQSPSVIRQSPTQRRKTSTTSSTSRAPPPTNPDASSSSSSF). Over residues 127-136 (TVQQQSPSVI) the composition is skewed to polar residues. Ser-132 carries the post-translational modification Phosphoserine. The segment covering 137 to 154 (RQSPTQRRKTSTTSSTSR) has biased composition (low complexity). One can recognise a PINIT domain in the interval 162–314 (DASSSSSSFA…KLFGYIVEMI (153 aa)). An SP-RING-type zinc finger spans residues 344–431 (EDEEMGLTTT…LQNCQKNVEQ (88 aa)). Residues Cys-377, His-379, Cys-400, and Cys-403 each coordinate Zn(2+). Disordered stretches follow at residues 443-584 (ILED…DDDR), 596-616 (STNT…TLDP), and 672-733 (SPDV…ISDS). The span at 444-454 (LEDDDDSDSDS) shows a compositional bias: acidic residues. The segment covering 501 to 511 (NNHDDSNRHSN) has biased composition (basic and acidic residues). Positions 512–553 (DNNNNSIKNNDSHNKNNNNNNNNNNNNNDNNNSIENNDSNSN) are enriched in low complexity. 3 stretches are compositionally biased toward polar residues: residues 561–574 (RSNT…KNLM), 596–611 (STNT…SAPS), and 672–683 (SPDVSVSSPTPR). Positions 684-699 (NTASNASSSALSTPPL) are enriched in low complexity. A compositionally biased stretch (polar residues) spans 721–733 (INSNSYTASISDS). The residue at position 794 (Ser-794) is a Phosphoserine. A required for localization at the bud neck region spans residues 794–904 (SLPTTEAITR…QDYGKKYNSG (111 aa)). Positions 877–894 (RQLSNTSSTSPIMGTWKT) are enriched in polar residues. The disordered stretch occupies residues 877-904 (RQLSNTSSTSPIMGTWKTQDYGKKYNSG).

Belongs to the PIAS family. In terms of assembly, interacts with UBC9 and CDC3. Phosphorylated in early M-phase. In terms of processing, autosumoylated upon ethanol stress.

It is found in the cytoplasm. It localises to the nucleus. Its subcellular location is the bud neck. It functions in the pathway protein modification; protein sumoylation. Acts as an E3 ligase mediating SUMO/Smt3 attachment to septins and PCNA. May be involved in chromosome maintenance. The protein is E3 SUMO-protein ligase SIZ1 (SIZ1) of Saccharomyces cerevisiae (strain ATCC 204508 / S288c) (Baker's yeast).